The sequence spans 459 residues: Cysteine--tRNA ligase (459 aa).

Cys-28 provides a ligand contact to Zn(2+). Positions 30–40 match the 'HIGH' region motif; that stretch reads MTVYDFCHLGH. Residues Cys-209, His-234, and Glu-238 each contribute to the Zn(2+) site. A 'KMSKS' region motif is present at residues 266-270; the sequence is KMAKS. Lys-269 is an ATP binding site. The interval 440–459 is disordered; that stretch reads QARGIELEDTPEGTKWRRTR.

This sequence belongs to the class-I aminoacyl-tRNA synthetase family. Monomer. It depends on Zn(2+) as a cofactor.

It localises to the cytoplasm. It catalyses the reaction tRNA(Cys) + L-cysteine + ATP = L-cysteinyl-tRNA(Cys) + AMP + diphosphate. The sequence is that of Cysteine--tRNA ligase from Halorhodospira halophila (strain DSM 244 / SL1) (Ectothiorhodospira halophila (strain DSM 244 / SL1)).